The sequence spans 252 residues: Hydroxyacylglutathione hydrolase (252 aa).

Zn(2+)-binding residues include histidine 54, histidine 56, aspartate 58, histidine 59, histidine 111, aspartate 128, and histidine 166.

Belongs to the metallo-beta-lactamase superfamily. Glyoxalase II family. As to quaternary structure, monomer. Zn(2+) is required as a cofactor.

The enzyme catalyses an S-(2-hydroxyacyl)glutathione + H2O = a 2-hydroxy carboxylate + glutathione + H(+). Its pathway is secondary metabolite metabolism; methylglyoxal degradation; (R)-lactate from methylglyoxal: step 2/2. Thiolesterase that catalyzes the hydrolysis of S-D-lactoyl-glutathione to form glutathione and D-lactic acid. The chain is Hydroxyacylglutathione hydrolase from Vibrio campbellii (strain ATCC BAA-1116).